We begin with the raw amino-acid sequence, 492 residues long: uncharacterized protein (492 aa).

A run of 12 helical transmembrane segments spans residues 16-36 (FIAF…VMTM), 39-59 (VGPF…GVVL), 107-127 (SFNG…IPVV), 133-153 (IIIG…FISL), 162-182 (AIFY…ILGI), 210-230 (IIFI…LASI), 243-263 (FLIA…IISG), 291-311 (LVGG…NSLA), 350-370 (VLIS…IPFL), 394-414 (MAAA…FMIF), 429-449 (VSYV…LFPF), and 454-474 (VFNT…VGFF).

This sequence to M.genitalium MG225.

It localises to the cell membrane. This is an uncharacterized protein from Mycoplasma genitalium (strain ATCC 33530 / DSM 19775 / NCTC 10195 / G37) (Mycoplasmoides genitalium).